The chain runs to 105 residues: DNA-directed RNA polymerase subunit Rpo13 (105 aa).

2 stretches are compositionally biased toward basic and acidic residues: residues 1 to 10 (MSEDDSKKEP) and 70 to 80 (FDDVARSYSKA). 2 disordered regions span residues 1 to 35 (MSED…GGEF) and 70 to 105 (FDDV…EEEE). Over residues 81–97 (DKKKRRVEKKPKKGKVT) the composition is skewed to basic residues.

It belongs to the archaeal Rpo13 RNA polymerase subunit family. In terms of assembly, part of the 13-subunit RNA polymerase.

The protein resides in the cytoplasm. It catalyses the reaction RNA(n) + a ribonucleoside 5'-triphosphate = RNA(n+1) + diphosphate. Functionally, DNA-dependent RNA polymerase catalyzes the transcription of DNA into RNA using the four ribonucleoside triphosphates as substrates. In vitro binds dsDNA but not ssDNA. This chain is DNA-directed RNA polymerase subunit Rpo13, found in Sulfolobus acidocaldarius (strain ATCC 33909 / DSM 639 / JCM 8929 / NBRC 15157 / NCIMB 11770).